We begin with the raw amino-acid sequence, 449 residues long: Transcription factor AP-2 gamma (449 aa).

Residue Lys-10 forms a Glycyl lysine isopeptide (Lys-Gly) (interchain with G-Cter in SUMO) linkage. Residues 13–58 (EDCEDRHDSSSNGNPRIPHLSSPGQHLYSPAPPLSHTGVAEYQPPP) are disordered. The PPxY motif motif lies at 59-64 (YFPPPY). Residues 94 to 130 (AATGSQQQAWPGRQSQEGSSLASHHSRSASLIPHISG) form a disordered region. Over residues 95 to 111 (ATGSQQQAWPGRQSQEG) the composition is skewed to polar residues. Positions 112 to 124 (SSLASHHSRSASL) are enriched in low complexity. Position 251 is a phosphoserine; by PKA (Ser-251). The segment at 292–423 (RRKAAHVTLL…YIKEALIAID (132 aa)) is H-S-H (helix-span-helix), dimerization. Positions 426-449 (YMNPGDQSPADSSKTMEKMEKHRK) are disordered. Ser-433 carries the phosphoserine modification. A compositionally biased stretch (basic and acidic residues) spans 439–449 (KTMEKMEKHRK).

Belongs to the AP-2 family. As to quaternary structure, binds DNA as a dimer. Can form homodimers or heterodimers with other AP-2 family members. Interacts with WWOX. Interacts with UBE2I. Interacts with KCTD1; this interaction represses transcription activation. Interacts with CITED2 (via C-terminus); the interaction stimulates TFAP2B-transcriptional activity. Interacts with CITED4. Interacts with MTA1. Sumoylated on Lys-10; which inhibits transcriptional activity. As to expression, expressed in lung, ovary and testis. Expressed in most squamous epithelia. Also, detected in several exocrine glands including the prostate, the preputial and salivary glands, serous glands of the tongue and ocular harderian glands.

It localises to the nucleus. In terms of biological role, sequence-specific DNA-binding transcription factor that interacts with cellular enhancer elements to regulate transcription of selected genes, and which plays a key role in early embryonic development. AP-2 factors bind to the consensus sequence 5'-GCCNNNGGC-3' and activate genes involved in a large spectrum of important biological functions. TFAP2C plays a key role in early embryonic development by regulating both inner cell mass (ICM) and trophectoderm differentiation. At the 8-cell stage, during morula development, controls expression of cell-polarity genes. Upon trophoblast commitment, binds to late trophectoderm genes in blastocysts together with CDX2, and later to extra-embryonic ectoderm genes together with SOX2. Binds to both closed and open chromatin with other transcription factors. In Mus musculus (Mouse), this protein is Transcription factor AP-2 gamma.